A 293-amino-acid chain; its full sequence is DNA-directed RNA polymerase III subunit rpc6 (293 aa).

The protein belongs to the eukaryotic RPC34/RPC39 RNA polymerase subunit family. In terms of assembly, component of the RNA polymerase III (Pol III) complex.

The protein resides in the nucleus. In terms of biological role, DNA-dependent RNA polymerase catalyzes the transcription of DNA into RNA using the four ribonucleoside triphosphates as substrates. Specific peripheric component of RNA polymerase III which synthesizes small RNAs, such as 5S rRNA and tRNAs. May direct RNA Pol III binding to the TFIIIB-DNA complex. This chain is DNA-directed RNA polymerase III subunit rpc6 (polr3f), found in Dictyostelium discoideum (Social amoeba).